We begin with the raw amino-acid sequence, 280 residues long: Bifunctional protein FolD (280 aa).

Residues 159–161 (GRS), S184, and I225 each bind NADP(+).

It belongs to the tetrahydrofolate dehydrogenase/cyclohydrolase family. As to quaternary structure, homodimer.

The enzyme catalyses (6R)-5,10-methylene-5,6,7,8-tetrahydrofolate + NADP(+) = (6R)-5,10-methenyltetrahydrofolate + NADPH. It carries out the reaction (6R)-5,10-methenyltetrahydrofolate + H2O = (6R)-10-formyltetrahydrofolate + H(+). It participates in one-carbon metabolism; tetrahydrofolate interconversion. Its function is as follows. Catalyzes the oxidation of 5,10-methylenetetrahydrofolate to 5,10-methenyltetrahydrofolate and then the hydrolysis of 5,10-methenyltetrahydrofolate to 10-formyltetrahydrofolate. The polypeptide is Bifunctional protein FolD (Methanosphaerula palustris (strain ATCC BAA-1556 / DSM 19958 / E1-9c)).